A 20-amino-acid chain; its full sequence is Cytochrome P450 3A5 (20 aa).

It belongs to the cytochrome P450 family. The cofactor is heme.

The protein localises to the endoplasmic reticulum membrane. It localises to the microsome membrane. It catalyses the reaction an organic molecule + reduced [NADPH--hemoprotein reductase] + O2 = an alcohol + oxidized [NADPH--hemoprotein reductase] + H2O + H(+). 6-beta-testosterone hydroxylase. The protein is Cytochrome P450 3A5 of Papio sp. (Baboon).